A 179-amino-acid chain; its full sequence is Pyridoxal 5'-phosphate synthase subunit PdxT (179 aa).

An L-glutamine-binding site is contributed by 48–50 (GES). Cys-79 functions as the Nucleophile in the catalytic mechanism. L-glutamine is bound by residues Arg-101 and 127 to 128 (IR). Residues His-163 and Glu-165 each act as charge relay system in the active site.

Belongs to the glutaminase PdxT/SNO family. In terms of assembly, in the presence of PdxS, forms a dodecamer of heterodimers. Only shows activity in the heterodimer.

The catalysed reaction is aldehydo-D-ribose 5-phosphate + D-glyceraldehyde 3-phosphate + L-glutamine = pyridoxal 5'-phosphate + L-glutamate + phosphate + 3 H2O + H(+). It catalyses the reaction L-glutamine + H2O = L-glutamate + NH4(+). The protein operates within cofactor biosynthesis; pyridoxal 5'-phosphate biosynthesis. In terms of biological role, catalyzes the hydrolysis of glutamine to glutamate and ammonia as part of the biosynthesis of pyridoxal 5'-phosphate. The resulting ammonia molecule is channeled to the active site of PdxS. In Francisella tularensis subsp. novicida (strain U112), this protein is Pyridoxal 5'-phosphate synthase subunit PdxT.